Consider the following 50-residue polypeptide: Photosystem II reaction center protein M (50 aa).

The chain crosses the membrane as a helical span at residues 7–27 (GFIISLLFVGIPTIFLVGLYI). The disordered stretch occupies residues 31–50 (DGEKSSFFSDSSKGKLGPKS).

The protein belongs to the PsbM family. In terms of assembly, PSII is composed of 1 copy each of membrane proteins PsbA, PsbB, PsbC, PsbD, PsbE, PsbF, PsbH, PsbI, PsbJ, PsbK, PsbL, PsbM, PsbT, PsbX, PsbY, Psb30/Ycf12, peripheral proteins PsbO, CyanoQ (PsbQ), PsbU, PsbV and a large number of cofactors. It forms dimeric complexes.

The protein resides in the cellular thylakoid membrane. In terms of biological role, one of the components of the core complex of photosystem II (PSII). PSII is a light-driven water:plastoquinone oxidoreductase that uses light energy to abstract electrons from H(2)O, generating O(2) and a proton gradient subsequently used for ATP formation. It consists of a core antenna complex that captures photons, and an electron transfer chain that converts photonic excitation into a charge separation. This subunit is found at the monomer-monomer interface. This chain is Photosystem II reaction center protein M, found in Prochlorococcus marinus (strain SARG / CCMP1375 / SS120).